The primary structure comprises 122 residues: Serum amyloid A-3 protein (122 aa).

The first 18 residues, 1–18 (MKLSIGIIFCFLILGVNS), serve as a signal peptide directing secretion. Positions 88 to 122 (GRGAEDSKADQEANQWGRSGNDPNHFRPKGLPDKY) are disordered. Over residues 99-109 (EANQWGRSGND) the composition is skewed to polar residues.

It belongs to the SAA family. Expressed by the liver; secreted in plasma. Expressed in synovial fibroblasts.

It localises to the secreted. Functionally, major acute phase reactant. Apolipoprotein of the HDL complex. In vitro exhibits antimicrobial activity against Escherichia coli, Streptococcus uberis and Pseudomonas aeruginosa. In Oryctolagus cuniculus (Rabbit), this protein is Serum amyloid A-3 protein (SAA3).